A 556-amino-acid polypeptide reads, in one-letter code: Oxygen-dependent choline dehydrogenase (556 aa).

4–33 (DYIIIGAGSAGNVLATRLTEDPNTTVLLLE) serves as a coordination point for FAD. His473 functions as the Proton acceptor in the catalytic mechanism.

Belongs to the GMC oxidoreductase family. Requires FAD as cofactor.

It catalyses the reaction choline + A = betaine aldehyde + AH2. It carries out the reaction betaine aldehyde + NAD(+) + H2O = glycine betaine + NADH + 2 H(+). The protein operates within amine and polyamine biosynthesis; betaine biosynthesis via choline pathway; betaine aldehyde from choline (cytochrome c reductase route): step 1/1. Its function is as follows. Involved in the biosynthesis of the osmoprotectant glycine betaine. Catalyzes the oxidation of choline to betaine aldehyde and betaine aldehyde to glycine betaine at the same rate. The polypeptide is Oxygen-dependent choline dehydrogenase (Escherichia coli O6:K15:H31 (strain 536 / UPEC)).